Here is a 152-residue protein sequence, read N- to C-terminus: MVRYTVDELFHLKPTESLPVQFDAEEFKAIIEKVKQIQALKEEEFNAHGGHFNRRRSSHHHHGRPKVKHTKPKVTTDSDGWSTFEAANKKVNEDEESENVSVAVVPETLKVKPNNKNISSSRPADNKDIIADKQTHSFNAFAALESDEEEET.

The disordered stretch occupies residues 46-133 (NAHGGHFNRR…ADNKDIIADK (88 aa)). The segment covering 51 to 72 (HFNRRRSSHHHHGRPKVKHTKP) has biased composition (basic residues). The span at 114–123 (NNKNISSSRP) shows a compositional bias: polar residues. A compositionally biased stretch (basic and acidic residues) spans 124–133 (ADNKDIIADK).

It belongs to the CAF20 family.

Its subcellular location is the cytoplasm. Functionally, acts as an inhibitor of cap-dependent translation. Competes with eIF4G1 and EAP1 for binding to eIF4E and interferes with the formation of the eIF4F complex, inhibiting translation and stabilizing mRNA. This Vanderwaltozyma polyspora (strain ATCC 22028 / DSM 70294 / BCRC 21397 / CBS 2163 / NBRC 10782 / NRRL Y-8283 / UCD 57-17) (Kluyveromyces polysporus) protein is Cap-associated protein CAF20 (CAF20).